The primary structure comprises 344 residues: Type VI secretion system component TssA1 (344 aa).

As to quaternary structure, homododecamer. Interacts with TssB1 and TssC1. Interacts with TssK1 and TssF1.

In terms of biological role, core component of the H1 type VI (H1-T6SS) secretion system that plays a role in the release of toxins targeting both eukaryotic and prokaryotic species. Forms a dodecameric ring-shaped structure located at one end of the T6SS sheath. May properly attach the pre-assembled sheath onto the baseplate and/or stabilize the sheaths tubular structure. The polypeptide is Type VI secretion system component TssA1 (Pseudomonas aeruginosa (strain ATCC 15692 / DSM 22644 / CIP 104116 / JCM 14847 / LMG 12228 / 1C / PRS 101 / PAO1)).